Reading from the N-terminus, the 338-residue chain is NAC domain-containing protein 46 (338 aa).

Residues 20–171 (LPPGFRFHPT…EWVVCRVFHK (152 aa)) form the NAC domain. A DNA-binding region spans residues 118 to 177 (VGMKKTLVFYTGRAPKGEKTNWVMHEYRLDGKYSYHNLPKTARDEWVVCRVFHKNAPSTT).

In terms of assembly, interacts with RCD1.

The protein resides in the nucleus. Its function is as follows. Transcriptional activator that acts as a positive regulator of leaf senescence. Activates NYC1, SGR1, SGR2 and PAO, which are genes involved in chlorophyll catabolic processes. Activates senescence-associated genes, such as RNS1, SAG12 and SAG13. This Arabidopsis thaliana (Mouse-ear cress) protein is NAC domain-containing protein 46.